Reading from the N-terminus, the 399-residue chain is Sister chromatid cohesion protein DCC1 (399 aa).

The protein belongs to the DCC1 family. Component of the CTF18-RFC complex which consists of CTF8, CTF18, DSCC1 and the RFC complex. Interacts with CTF8 and CTF18. Interacts with DDX11.

The protein localises to the nucleus. Functionally, loads PCNA onto primed templates regulating velocity, spacing and restart activity of replication forks. May couple DNA replication to sister chromatid cohesion through regulation of the acetylation of the cohesin subunit SMC3. This is Sister chromatid cohesion protein DCC1 (DSCC1) from Mus musculus (Mouse).